A 323-amino-acid polypeptide reads, in one-letter code: Oligodendrocyte transcription factor 2 (323 aa).

Over residues 1 to 13 (MDSDASLVSSRPS) the composition is skewed to polar residues. Residues 1-107 (MDSDASLVSS…KKQMTEPELQ (107 aa)) form a disordered region. Over residues 77 to 93 (SSSSSTSSSTSSAATSS) the composition is skewed to low complexity. Positions 108 to 162 (QLRLKINSRERKRMHDLNIAMDGLREVMPYAHGPSVRKLSKIATLLLARNYILML) constitute a bHLH domain.

As to quaternary structure, interacts with NKX2-2. Interacts with ZNF488. As to expression, expressed specifically in the brain.

The protein resides in the nucleus. It is found in the cytoplasm. Functionally, required for oligodendrocyte and motor neuron specification in the spinal cord, as well as for the development of somatic motor neurons in the hindbrain. Functions together with ZNF488 to promote oligodendrocyte differentiation. Cooperates with OLIG1 to establish the pMN domain of the embryonic neural tube. Antagonist of V2 interneuron and of NKX2-2-induced V3 interneuron development. This chain is Oligodendrocyte transcription factor 2 (Olig2), found in Mus musculus (Mouse).